The primary structure comprises 83 residues: UPF0346 protein M28_Spy0369 (83 aa).

Belongs to the UPF0346 family.

This Streptococcus pyogenes serotype M28 (strain MGAS6180) protein is UPF0346 protein M28_Spy0369.